The sequence spans 95 residues: Opiscorpine-2 (95 aa).

The first 19 residues, methionine 1–cysteine 19, serve as a signal peptide directing secretion. Residues glutamate 55–tyrosine 95 enclose the BetaSPN-type CS-alpha/beta domain. 3 disulfide bridges follow: cysteine 58–cysteine 82, cysteine 68–cysteine 87, and cysteine 72–cysteine 89.

The protein belongs to the long chain scorpion toxin family. Class 3 subfamily. Expressed by the venom gland.

Its subcellular location is the secreted. In terms of biological role, has antimicrobial activity against yeasts and bacteria. This chain is Opiscorpine-2, found in Opistophthalmus carinatus (African yellow leg scorpion).